The primary structure comprises 240 residues: Ribose-5-phosphate isomerase A (240 aa).

Substrate is bound by residues Thr41–Thr44, Asp94–Asp97, and Lys107–Gly110. Glu116 functions as the Proton acceptor in the catalytic mechanism. A substrate-binding site is contributed by Lys134.

This sequence belongs to the ribose 5-phosphate isomerase family. As to quaternary structure, homodimer.

It catalyses the reaction aldehydo-D-ribose 5-phosphate = D-ribulose 5-phosphate. It functions in the pathway carbohydrate degradation; pentose phosphate pathway; D-ribose 5-phosphate from D-ribulose 5-phosphate (non-oxidative stage): step 1/1. Functionally, catalyzes the reversible conversion of ribose-5-phosphate to ribulose 5-phosphate. This Polaromonas sp. (strain JS666 / ATCC BAA-500) protein is Ribose-5-phosphate isomerase A.